A 125-amino-acid polypeptide reads, in one-letter code: Large ribosomal subunit protein eL32 (125 aa).

This sequence belongs to the eukaryotic ribosomal protein eL32 family.

The chain is Large ribosomal subunit protein eL32 (rpl32e) from Sulfolobus acidocaldarius (strain ATCC 33909 / DSM 639 / JCM 8929 / NBRC 15157 / NCIMB 11770).